We begin with the raw amino-acid sequence, 197 residues long: RIP-like protein (197 aa).

The segment at 1-20 (MNSTQSPVYRTSVEQKRHAQ) is disordered. The RIP-type zinc finger occupies 122-191 (CPVCQIKNLR…GQLYDMCGSC (70 aa)).

The chain is RIP-like protein (Ripalpha) from Drosophila melanogaster (Fruit fly).